Reading from the N-terminus, the 738-residue chain is Pentatricopeptide repeat-containing protein At5g65570 (738 aa).

13 PPR repeats span residues 98-128, 129-163, 164-198, 200-230, 231-265, 266-300, 301-331, 332-366, 367-401, 402-432, 433-467, 468-502, and 503-537; these read AEIS…MSER, HIVT…NVLP, DEYT…GLEV, NVFV…VEEK, DVVL…KVQP, NEYT…GFES, ALAS…IEYP, NQVS…SIKP, NSFT…GFDR, DKYA…LSEV, DVIS…GLQP, NDVT…KIML, and TNDH…DLVL. The interval 537–612 is type E motif; sequence LWRTLLSACK…NPAMSWVEIN (76 aa). Positions 613–644 are type E(+) motif; the sequence is KETHTFMAGDLFSHPNSEQILENLEELIKKSK. A type DYW motif region spans residues 645-738; that stretch reads DLGYVEDKSC…DGSCSCGDYW (94 aa).

The protein belongs to the PPR family. PCMP-H subfamily.

This is Pentatricopeptide repeat-containing protein At5g65570 (PCMP-H47) from Arabidopsis thaliana (Mouse-ear cress).